Consider the following 878-residue polypeptide: Ecdysone receptor (878 aa).

Disordered regions lie at residues 1–27 and 209–254; these read MKRR…SSSN and GLGM…SKKG. Positions 1–263 are modulating; the sequence is MKRRWSNNGG…GPAPRVQEEL (263 aa). 2 consecutive NR C4-type zinc fingers follow at residues 264–284 and 300–324; these read CLVC…CEGC and CKFG…LKKC. Positions 264 to 336 form a DNA-binding region, nuclear receptor; it reads CLVCGDRASG…VGMRPECVVP (73 aa). The tract at residues 344–374 is disordered; that stretch reads RREKKAQKEKDKMTTSPSSQHGGNGSLASGG. Positions 365–374 are enriched in gly residues; the sequence is GGNGSLASGG. The NR LBD domain occupies 419–654; that stretch reads NQLAVIYKLI…FLEEIWDVHA (236 aa). 2 stretches are compositionally biased toward low complexity: residues 698-709 and 728-759; these read TSAAAAAAQHQP and QTQP…QLQP. The segment at 698–759 is disordered; sequence TSAAAAAAQH…QPQLQTQLQP (62 aa).

This sequence belongs to the nuclear hormone receptor family. NR1 subfamily. Heterodimer of USP and ECR. Only the heterodimer is capable of high-affinity binding to ecdysone. Interacts with trr in an ecdysone-dependent manner. Upon ecdysone stimulation, interacts with Nup98. As to expression, isoform B1 predominates over isoform A in larval tissues, imaginal histoblast nests and midgut islands. Isoform A predominates over B1 in imaginal disks, and the larval prothoracic gland.

It localises to the nucleus. Its function is as follows. Receptor for ecdysone. Binds to ecdysone response elements (ECRES) following ecdysone-binding, and recruitment of a complex containing the histone methyltransferase trr, leads to activate transcription of target genes. The protein is Ecdysone receptor (EcR) of Drosophila melanogaster (Fruit fly).